The following is a 184-amino-acid chain: Adenine phosphoribosyltransferase (184 aa).

The protein belongs to the purine/pyrimidine phosphoribosyltransferase family. As to quaternary structure, homodimer.

It is found in the cytoplasm. The catalysed reaction is AMP + diphosphate = 5-phospho-alpha-D-ribose 1-diphosphate + adenine. Its pathway is purine metabolism; AMP biosynthesis via salvage pathway; AMP from adenine: step 1/1. Its function is as follows. Catalyzes a salvage reaction resulting in the formation of AMP, that is energically less costly than de novo synthesis. The chain is Adenine phosphoribosyltransferase from Corynebacterium diphtheriae (strain ATCC 700971 / NCTC 13129 / Biotype gravis).